Reading from the N-terminus, the 946-residue chain is Bifunctional glutamine synthetase adenylyltransferase/adenylyl-removing enzyme (946 aa).

The adenylyl removase stretch occupies residues 1-440; that stretch reads MKPLSSPLQQ…VFNELIGDDE (440 aa). The interval 449–946 is adenylyl transferase; that stretch reads SEQWRELWQD…ASWQKWLVEE (498 aa).

It belongs to the GlnE family. Requires Mg(2+) as cofactor.

It catalyses the reaction [glutamine synthetase]-O(4)-(5'-adenylyl)-L-tyrosine + phosphate = [glutamine synthetase]-L-tyrosine + ADP. The enzyme catalyses [glutamine synthetase]-L-tyrosine + ATP = [glutamine synthetase]-O(4)-(5'-adenylyl)-L-tyrosine + diphosphate. Involved in the regulation of glutamine synthetase GlnA, a key enzyme in the process to assimilate ammonia. When cellular nitrogen levels are high, the C-terminal adenylyl transferase (AT) inactivates GlnA by covalent transfer of an adenylyl group from ATP to specific tyrosine residue of GlnA, thus reducing its activity. Conversely, when nitrogen levels are low, the N-terminal adenylyl removase (AR) activates GlnA by removing the adenylyl group by phosphorolysis, increasing its activity. The regulatory region of GlnE binds the signal transduction protein PII (GlnB) which indicates the nitrogen status of the cell. The sequence is that of Bifunctional glutamine synthetase adenylyltransferase/adenylyl-removing enzyme from Shigella boydii serotype 18 (strain CDC 3083-94 / BS512).